The chain runs to 315 residues: Zinc transport protein ZntB (315 aa).

Residues 1–250 (MGFMIEHWDF…RDEKTNKNSY (250 aa)) are Cytoplasmic-facing. A helical transmembrane segment spans residues 251–271 (LFTLVATIFLPTSFLTGLLGI). Topologically, residues 272–282 (NIGGMPGVESS) are periplasmic. Residues 283–303 (MAFTWFCIALIVIFGLEWLLF) form a helical membrane-spanning segment. Topologically, residues 304–315 (KRLGFTNKTDDE) are cytoplasmic.

It belongs to the CorA metal ion transporter (MIT) (TC 1.A.35) family. In terms of assembly, homopentamer. Can assemble pentamers in the absence of the transmembrane regions.

The protein localises to the cell inner membrane. The enzyme catalyses Zn(2+)(out) + H(+)(out) = Zn(2+)(in) + H(+)(in). Zinc transporter. Acts as a Zn(2+):proton symporter, which likely mediates zinc ion uptake. The chain is Zinc transport protein ZntB from Vibrio parahaemolyticus serotype O3:K6 (strain RIMD 2210633).